Reading from the N-terminus, the 694-residue chain is DNA-binding protein RFX2 (694 aa).

The RFX-type winged-helix DNA-binding region spans 174–249 (HLQWLLDNYE…YHYYGIRLKP (76 aa)). Disordered stretches follow at residues 267 to 310 (QQPI…QHHQ) and 658 to 694 (KDDVSELGSDTEGDPHISGQPPVKRERVELNHSMQEM). Over residues 289 to 299 (PANSSQHASPE) the composition is skewed to polar residues. Low complexity predominate over residues 300 to 310 (QSVAAQSQHHQ).

Belongs to the RFX family. Homodimer. Heterodimer; heterodimerizes with other rfx proteins. In terms of tissue distribution, preferentially expressed in ciliated tissues, such as neural tube, gastrocoel roof plate, epidermal multiciliated cells, otic vesicles and kidneys.

The protein resides in the nucleus. It localises to the cytoplasm. In terms of biological role, transcription factor that acts as a key regulator of ciliogenesis. Specifically regulates expression of genes required for cilium assembly and function. Recognizes and binds the X-box, a regulatory motif with DNA sequence 5'-GTNRCC(0-3N)RGYAAC-3' present on promoters. Required for neural tube closure and neural ciliogenesis. The protein is DNA-binding protein RFX2 (rfx2) of Xenopus laevis (African clawed frog).